Here is a 1534-residue protein sequence, read N- to C-terminus: DNA polymerase alpha catalytic subunit (1534 aa).

Residues 1-12 show a composition bias toward low complexity; it reads MDEGSADAGASG. 3 disordered regions span residues 1–23, 96–141, and 864–905; these read MDEG…SEAV, THRT…LSAA, and FNST…GPSY. The segment covering 116 to 125 has biased composition (basic residues); sequence RKRKQPRPQS. The segment covering 127–141 has biased composition (low complexity); the sequence is RPPQQSAAAASLSAA. Composition is skewed to basic and acidic residues over residues 864-882 and 889-898; these read FNST…RPDE and DEGHHVDQGK. 8 residues coordinate Zn(2+): cysteine 1340, cysteine 1343, cysteine 1383, cysteine 1386, cysteine 1422, cysteine 1427, cysteine 1448, and cysteine 1454. The CysA-type zinc-finger motif lies at 1340–1386; that stretch reads CPSCSTTFDCPPVSSLIIGSSSGNVSNPNEGNDASINFWRRMRCPRC. A CysB motif motif is present at residues 1422–1451; it reads CDDEGCKYSTHSVNLRVMGDSERGTICPNY.

This sequence belongs to the DNA polymerase type-B family.

The protein resides in the nucleus. It carries out the reaction DNA(n) + a 2'-deoxyribonucleoside 5'-triphosphate = DNA(n+1) + diphosphate. Its function is as follows. Polymerase alpha in a complex with DNA primase is a replicative polymerase. The chain is DNA polymerase alpha catalytic subunit from Oryza sativa subsp. japonica (Rice).